The primary structure comprises 86 residues: Defensin-like protein a (86 aa).

The N-terminal stretch at 1–23 (MRCSVLFVVSYVIMSLLISHVQG) is a signal peptide. 4 disulfide bridges follow: Cys33-Cys81, Cys43-Cys67, Cys51-Cys76, and Cys65-Cys78.

The protein belongs to the DEFL family. In terms of tissue distribution, expressed specifically in anthers.

The protein resides in the secreted. Its function is as follows. Involved in self-incompatibility. The polypeptide is Defensin-like protein a (SCRa) (Arabidopsis lyrata (Lyre-leaved rock-cress)).